The chain runs to 414 residues: Serine hydroxymethyltransferase (414 aa).

Residues Leu116 and 120 to 122 (GHL) each bind (6S)-5,6,7,8-tetrahydrofolate. The residue at position 224 (Lys224) is an N6-(pyridoxal phosphate)lysine. (6S)-5,6,7,8-tetrahydrofolate-binding positions include Glu240 and 348 to 350 (SPF).

This sequence belongs to the SHMT family. In terms of assembly, homodimer. Pyridoxal 5'-phosphate is required as a cofactor.

Its subcellular location is the cytoplasm. The enzyme catalyses (6R)-5,10-methylene-5,6,7,8-tetrahydrofolate + glycine + H2O = (6S)-5,6,7,8-tetrahydrofolate + L-serine. It participates in one-carbon metabolism; tetrahydrofolate interconversion. The protein operates within amino-acid biosynthesis; glycine biosynthesis; glycine from L-serine: step 1/1. Catalyzes the reversible interconversion of serine and glycine with tetrahydrofolate (THF) serving as the one-carbon carrier. This reaction serves as the major source of one-carbon groups required for the biosynthesis of purines, thymidylate, methionine, and other important biomolecules. Also exhibits THF-independent aldolase activity toward beta-hydroxyamino acids, producing glycine and aldehydes, via a retro-aldol mechanism. This Campylobacter concisus (strain 13826) protein is Serine hydroxymethyltransferase.